A 1416-amino-acid polypeptide reads, in one-letter code: MKSLKSRLRRQDVPGPASSGAAAASAHAADWNKYDDRLMKAAERGDVEKVTSILAKKGVNPGKLDVEGRSVFHVVTSKGNLECLNAILIHGVDITTSDTAGRNALHLAAKYGHALCLQKLLQYNCPTEHADLQGRTALHDAAMADCPSSIQLLCDHGASVNAKDVDGRTPLVLATQMSRPTICQLLIDRGADVNSRDKQNRTALMLGCEYGCRDAVEVLIKNGADISLLDALGHDSSYYARIGDNLDILTLLKTASENTNKGRELWKKGPSLQQRNLTHMQDEVNVKSHQREHQNIQDLEIENEDLKERLRKIQQEQRILLDKVNGLQLQLNEEVMVADDLESEREKLKSLLAAKEKQHEESLRTIEALKNRFKYFESDHLGSGSHFSNRKEDMLLKQGQMYMADSQCTSPGIPAHMQSRSMLRPLELSLPSQTSYSENEILKKELEAMRTFCESAKQDRLKLQNELAHKVAECKALALECERVKEDSDEQIKQLEDALKDVQKRMYESEGKVKQMQTHFLALKEHLTSEAASGNHRLTEELKDQLKDLKVKYEGASAEVGKLRNQIKQNEMIVEEFKRDEGKLIEENKRLQKELSMCEMEREKKGRKVTEMEGQAKELSAKLALSIPAEKFENMKSSLSNEVNEKAKKLVEMEREHEKSLSEIRQLKRELENVKAKLAQHVKPEEHEQVKSRLEQKSGELGKKITELTLKNQTLQKEIEKVYLDNKLLKEQAHNLTIEMKNHYVPLKVSEDMKKSHDAIIDDLNRKLLDVTQKYTEKKLEMEKLLLENDSLSKDVSRLETVFVPPEKHEKEIIALKSNIVELKKQLSELKKKCGEDQEKIHALTSENTNLKKMMSNQYVPVKTHEEVKMTLNDTLAKTNRELLDVKKKFEDINQEFVKIKDKNEILKRNLENTQNQIKAEYISLAEHEAKMSSLSQSMRKVQDSNAEILANYRKGQEEIVTLHAEIKAQKKELDTIQECIKVKYAPIVSFEECERKFKATEKELKDQLSEQTQKYSVSEEEVKKNKQENDKLKKEIFTLQKDLRDKTVLIEKSHEMERALSRKTDELNKQLKDLSQKYTEVKNVKEKLVEENAKQTSEILAVQNLLQKQHVPLEQVEALKKSLNGTIENLKEELKSMQRCYEKEQQTVTKLHQLLENQKNSSVPLAEHLQIKEAFEKEVGIIKASLREKEEESQNKMEEVSKLQSEVQNTKQALKKLETREVVDLSKYKATKSDLETQISSLNEKLANLNRKYEEVCEEVLHAKKKEISAKDEKELLHFSIEQEIKDQKERCDKSLTTITELQRRIQESAKQIEAKDNKITELLNDVERLKQALNGLSQLTYTSGNPTKRQSQLIDTLQHQVKSLEQQLADADRQHQEVIAIYRTHLLSAAQGHMDEDVQEALLQIIQMRQGLVC.

Met-1 is modified (N-acetylmethionine). Positions Met-1–Ala-24 are disordered. ANK repeat units lie at residues Leu-38–Val-66, Glu-67–Thr-96, Ala-100–His-129, Gln-133–Ala-162, Asp-166–Ser-195, and Gln-199–Leu-228. 2 coiled-coil regions span residues Val-286–Lys-374 and Glu-438–Thr-1386. Lys-1035 is covalently cross-linked (Glycyl lysine isopeptide (Lys-Gly) (interchain with G-Cter in SUMO2)).

As to quaternary structure, component of the apoptosome complex, composed of APAF1, pro-caspase-9 and UACA. In the complex, it probably interacts directly with APAF1. Interacts with LGALS3, ARF6 and ACTB. Interacts with RAB39A. In terms of tissue distribution, highly expressed in skeletal muscle, heart, kidney and pancreas. Expressed in choroid, retina and epidermal melanocytes. Expressed in eye muscles and thyroid follicular cells.

The protein resides in the nucleus. It is found in the cytoplasm. The protein localises to the cytoskeleton. In terms of biological role, regulates APAF1 expression and plays an important role in the regulation of stress-induced apoptosis. Promotes apoptosis by regulating three pathways, apoptosome up-regulation, LGALS3/galectin-3 down-regulation and NF-kappa-B inactivation. Regulates the redistribution of APAF1 into the nucleus after proapoptotic stress. Down-regulates the expression of LGALS3 by inhibiting NFKB1. Modulates isoactin dynamics to regulate the morphological alterations required for cell growth and motility. Interaction with ARF6 may modulate cell shape and motility after injury. May be involved in multiple neurite formation. This chain is Uveal autoantigen with coiled-coil domains and ankyrin repeats (UACA), found in Homo sapiens (Human).